Reading from the N-terminus, the 280-residue chain is Acetyl-coenzyme A carboxylase carboxyl transferase subunit beta (280 aa).

Residues 25–280 form the CoA carboxyltransferase N-terminal domain; that stretch reads VMRECPICHA…RLHTKENAYG (256 aa). Zn(2+)-binding residues include Cys-29, Cys-32, Cys-47, and Cys-50. The segment at 29–50 adopts a C4-type zinc-finger fold; the sequence is CPICHAKFLSMRLGRDHTCPKC.

It belongs to the AccD/PCCB family. Acetyl-CoA carboxylase is a heterohexamer composed of biotin carboxyl carrier protein (AccB), biotin carboxylase (AccC) and two subunits each of ACCase subunit alpha (AccA) and ACCase subunit beta (AccD). Zn(2+) serves as cofactor.

The protein resides in the cytoplasm. It carries out the reaction N(6)-carboxybiotinyl-L-lysyl-[protein] + acetyl-CoA = N(6)-biotinyl-L-lysyl-[protein] + malonyl-CoA. Its pathway is lipid metabolism; malonyl-CoA biosynthesis; malonyl-CoA from acetyl-CoA: step 1/1. Component of the acetyl coenzyme A carboxylase (ACC) complex. Biotin carboxylase (BC) catalyzes the carboxylation of biotin on its carrier protein (BCCP) and then the CO(2) group is transferred by the transcarboxylase to acetyl-CoA to form malonyl-CoA. This Lactobacillus helveticus (strain DPC 4571) protein is Acetyl-coenzyme A carboxylase carboxyl transferase subunit beta.